Here is a 152-residue protein sequence, read N- to C-terminus: 3-hydroxyacyl-[acyl-carrier-protein] dehydratase FabZ (152 aa).

Histidine 58 is an active-site residue.

This sequence belongs to the thioester dehydratase family. FabZ subfamily.

The protein resides in the cytoplasm. It catalyses the reaction a (3R)-hydroxyacyl-[ACP] = a (2E)-enoyl-[ACP] + H2O. Functionally, involved in unsaturated fatty acids biosynthesis. Catalyzes the dehydration of short chain beta-hydroxyacyl-ACPs and long chain saturated and unsaturated beta-hydroxyacyl-ACPs. The sequence is that of 3-hydroxyacyl-[acyl-carrier-protein] dehydratase FabZ from Prochlorococcus marinus (strain AS9601).